Consider the following 208-residue polypeptide: Small ribosomal subunit protein uS5 (208 aa).

Residues 48–111 (LEDEVLDINM…DAAKLDITYI (64 aa)) form the S5 DRBM domain.

It belongs to the universal ribosomal protein uS5 family. As to quaternary structure, part of the 30S ribosomal subunit. Contacts protein S4.

In terms of biological role, with S4 and S12 plays an important role in translational accuracy. In Methanosarcina barkeri (strain Fusaro / DSM 804), this protein is Small ribosomal subunit protein uS5.